We begin with the raw amino-acid sequence, 55 residues long: Large ribosomal subunit protein bL33 (55 aa).

The protein belongs to the bacterial ribosomal protein bL33 family.

The sequence is that of Large ribosomal subunit protein bL33 from Proteus mirabilis (strain HI4320).